Consider the following 675-residue polypeptide: DNA ligase (675 aa).

NAD(+)-binding positions include 36–40 (DAVYD), 85–86 (SL), and glutamate 118. The active-site N6-AMP-lysine intermediate is lysine 120. Residues arginine 141, glutamate 178, lysine 298, and lysine 322 each coordinate NAD(+). Zn(2+) contacts are provided by cysteine 416, cysteine 419, cysteine 434, and cysteine 439. Residues 598-675 (TQPQTLSGKT…SEADLLALLQ (78 aa)) enclose the BRCT domain.

Belongs to the NAD-dependent DNA ligase family. LigA subfamily. It depends on Mg(2+) as a cofactor. Mn(2+) serves as cofactor.

The enzyme catalyses NAD(+) + (deoxyribonucleotide)n-3'-hydroxyl + 5'-phospho-(deoxyribonucleotide)m = (deoxyribonucleotide)n+m + AMP + beta-nicotinamide D-nucleotide.. DNA ligase that catalyzes the formation of phosphodiester linkages between 5'-phosphoryl and 3'-hydroxyl groups in double-stranded DNA using NAD as a coenzyme and as the energy source for the reaction. It is essential for DNA replication and repair of damaged DNA. The sequence is that of DNA ligase from Acaryochloris marina (strain MBIC 11017).